The chain runs to 91 residues: Probable Fe(2+)-trafficking protein (91 aa).

The protein belongs to the Fe(2+)-trafficking protein family.

Functionally, could be a mediator in iron transactions between iron acquisition and iron-requiring processes, such as synthesis and/or repair of Fe-S clusters in biosynthetic enzymes. The protein is Probable Fe(2+)-trafficking protein of Burkholderia mallei (strain NCTC 10247).